A 363-amino-acid polypeptide reads, in one-letter code: Protein-arginine kinase (363 aa).

Positions 24 to 254 constitute a Phosphagen kinase C-terminal domain; the sequence is IVLSSRIRLA…AQLIEQERSA (231 aa). ATP contacts are provided by residues 27-31, H92, R125, 176-180, and 207-212; these read SSRIR, RASVM, and RGIYGE. Positions 337–342 match the RDXXRA motif of the pArg binding pocket involved in allosteric regulation motif; that stretch reads RDIKRA.

Belongs to the ATP:guanido phosphotransferase family.

It carries out the reaction L-arginyl-[protein] + ATP = N(omega)-phospho-L-arginyl-[protein] + ADP + H(+). With respect to regulation, appears to be allosterically activated by the binding of pArg-containing polypeptides to the pArg-binding pocket localized in the C-terminal domain of McsB. Functionally, catalyzes the specific phosphorylation of arginine residues in a large number of proteins. Is part of the bacterial stress response system. Protein arginine phosphorylation has a physiologically important role and is involved in the regulation of many critical cellular processes, such as protein homeostasis, motility, competence, and stringent and stress responses, by regulating gene expression and protein activity. This chain is Protein-arginine kinase, found in Bacillus pumilus (strain SAFR-032).